A 353-amino-acid chain; its full sequence is Chorismate synthase (353 aa).

2 residues coordinate NADP(+): Arg-48 and Arg-54. Residues 125 to 127, 238 to 239, Gly-278, 293 to 297, and Arg-319 each bind FMN; these read RSS, NA, and KPTSS.

This sequence belongs to the chorismate synthase family. In terms of assembly, homotetramer. FMNH2 serves as cofactor.

It catalyses the reaction 5-O-(1-carboxyvinyl)-3-phosphoshikimate = chorismate + phosphate. Its pathway is metabolic intermediate biosynthesis; chorismate biosynthesis; chorismate from D-erythrose 4-phosphate and phosphoenolpyruvate: step 7/7. Functionally, catalyzes the anti-1,4-elimination of the C-3 phosphate and the C-6 proR hydrogen from 5-enolpyruvylshikimate-3-phosphate (EPSP) to yield chorismate, which is the branch point compound that serves as the starting substrate for the three terminal pathways of aromatic amino acid biosynthesis. This reaction introduces a second double bond into the aromatic ring system. This chain is Chorismate synthase, found in Bordetella bronchiseptica (strain ATCC BAA-588 / NCTC 13252 / RB50) (Alcaligenes bronchisepticus).